A 124-amino-acid polypeptide reads, in one-letter code: Large ribosomal subunit protein bL12 (124 aa).

This sequence belongs to the bacterial ribosomal protein bL12 family. Homodimer. Part of the ribosomal stalk of the 50S ribosomal subunit. Forms a multimeric L10(L12)X complex, where L10 forms an elongated spine to which 2 to 4 L12 dimers bind in a sequential fashion. Binds GTP-bound translation factors.

Forms part of the ribosomal stalk which helps the ribosome interact with GTP-bound translation factors. Is thus essential for accurate translation. This Janthinobacterium sp. (strain Marseille) (Minibacterium massiliensis) protein is Large ribosomal subunit protein bL12.